A 214-amino-acid polypeptide reads, in one-letter code: uncharacterized protein (214 aa).

The Response regulatory domain occupies 2–118 (KIVIADDHHV…ELVKTRQVHG (117 aa)). D53 carries the post-translational modification 4-aspartylphosphate. The 66-residue stretch at 142 to 207 (EKEKYYQLTR…QAALFAVKYN (66 aa)) folds into the HTH luxR-type domain. A DNA-binding region (H-T-H motif) is located at residues 166–185 (NKEIAAALFISEKTVKTHVS).

Post-translationally, phosphorylated by YhcY.

Its subcellular location is the cytoplasm. Its function is as follows. Member of the two-component regulatory system YhcY/YhcZ. This is an uncharacterized protein from Bacillus subtilis (strain 168).